Consider the following 94-residue polypeptide: Co-chaperonin GroES (94 aa).

Belongs to the GroES chaperonin family. As to quaternary structure, heptamer of 7 subunits arranged in a ring. Interacts with the chaperonin GroEL.

It is found in the cytoplasm. Functionally, together with the chaperonin GroEL, plays an essential role in assisting protein folding. The GroEL-GroES system forms a nano-cage that allows encapsulation of the non-native substrate proteins and provides a physical environment optimized to promote and accelerate protein folding. GroES binds to the apical surface of the GroEL ring, thereby capping the opening of the GroEL channel. The polypeptide is Co-chaperonin GroES (Thermoanaerobacter pseudethanolicus (strain ATCC 33223 / 39E) (Clostridium thermohydrosulfuricum)).